The primary structure comprises 101 residues: Urease subunit beta (101 aa).

It belongs to the urease beta subunit family. In terms of assembly, heterotrimer of UreA (gamma), UreB (beta) and UreC (alpha) subunits. Three heterotrimers associate to form the active enzyme.

The protein localises to the cytoplasm. The catalysed reaction is urea + 2 H2O + H(+) = hydrogencarbonate + 2 NH4(+). It functions in the pathway nitrogen metabolism; urea degradation; CO(2) and NH(3) from urea (urease route): step 1/1. This chain is Urease subunit beta, found in Paraburkholderia phymatum (strain DSM 17167 / CIP 108236 / LMG 21445 / STM815) (Burkholderia phymatum).